Consider the following 27-residue polypeptide: Protein YqiM (27 aa).

The polypeptide is Protein YqiM (Escherichia coli (strain K12)).